The primary structure comprises 416 residues: Xyloglucan O-acetyltransferase 1 (416 aa).

Over 1–14 the chain is Cytoplasmic; sequence MGLNEQQNVPSQRK. The chain crosses the membrane as a helical; Signal-anchor for type II membrane protein span at residues 15–35; the sequence is IIVFIVLAFIPIALFRLCFNN. The Lumenal portion of the chain corresponds to 36–416; it reads PFSSIKDTSL…MIEMLRRWKV (381 aa). 4 disulfides stabilise this stretch: cysteine 79–cysteine 129, cysteine 100–cysteine 165, cysteine 109–cysteine 395, and cysteine 318–cysteine 391. Asparagine 96 is a glycosylation site (N-linked (GlcNAc...) asparagine). A GDS motif motif is present at residues 152 to 154; it reads GDS. Residue serine 154 is the Nucleophile of the active site. 3 N-linked (GlcNAc...) asparagine glycosylation sites follow: asparagine 194, asparagine 269, and asparagine 319. Aspartate 390 acts as the Proton donor in catalysis. A DXXH motif motif is present at residues 390 to 393; that stretch reads DCLH. Histidine 393 (proton acceptor) is an active-site residue.

It belongs to the PC-esterase family. TBL subfamily.

The protein localises to the golgi apparatus membrane. Functionally, xyloglucan acetyltransferase that catalyzes the acetylation of fucosylated Gal residues on xyloglucan side chains. Predominantly catalyze 6-O-monoacetylation of Gal residues in the Fuc-Gal-Xyl trisaccharide side chains of xyloglucan oligomers. Involved in xyloglucan specific O-acetylation in roots and rosette leaves. This chain is Xyloglucan O-acetyltransferase 1, found in Arabidopsis thaliana (Mouse-ear cress).